The primary structure comprises 584 residues: Phosphoinositide phospholipase C 7 (584 aa).

The region spanning 26–102 (EIKTLFDNYS…NSPLSSLEVH (77 aa)) is the EF-hand-like domain. Residues 103–248 (QDMDAPLSHY…LKKRIMISTK (146 aa)) enclose the PI-PLC X-box domain. Active-site residues include His118 and His164. The tract at residues 285 to 318 (DRSVDKNDSNGDDDDDDDDDDDDDDGDDKIKKNA) is disordered. At Ser287 the chain carries Phosphoserine. The segment covering 294–311 (NGDDDDDDDDDDDDDDGD) has biased composition (acidic residues). Residues 323 to 439 (KHLIAIEAGK…GYIKKPDLLL (117 aa)) form the PI-PLC Y-box domain. The region spanning 433–566 (KKPDLLLKSN…QGIRAVPLRN (134 aa)) is the C2 domain.

Ca(2+) is required as a cofactor. In terms of tissue distribution, expressed in leaves, roots, flowers and siliques.

The protein localises to the cell membrane. It carries out the reaction a 1,2-diacyl-sn-glycero-3-phospho-(1D-myo-inositol-4,5-bisphosphate) + H2O = 1D-myo-inositol 1,4,5-trisphosphate + a 1,2-diacyl-sn-glycerol + H(+). Functionally, the production of the second messenger molecules diacylglycerol (DAG) and inositol 1,4,5-trisphosphate (IP3) is mediated by activated phosphatidylinositol-specific phospholipase C enzymes. The sequence is that of Phosphoinositide phospholipase C 7 (PLC7) from Arabidopsis thaliana (Mouse-ear cress).